A 246-amino-acid polypeptide reads, in one-letter code: Probable transcriptional regulatory protein Ent638_2432 (246 aa).

Belongs to the TACO1 family.

It is found in the cytoplasm. The protein is Probable transcriptional regulatory protein Ent638_2432 of Enterobacter sp. (strain 638).